A 1173-amino-acid chain; its full sequence is BRCA2-interacting transcriptional repressor EMSY (1173 aa).

In terms of domain architecture, ENT spans Cys16 to Val100. Over residues Ser149–Ser177 the composition is skewed to low complexity. Disordered stretches follow at residues Ser149–Val179, Lys191–Val216, Asn676–Pro720, Ser797–Ala816, Arg905–Val998, Pro1020–Ser1046, and Asp1139–Gln1173. Positions Thr683–Ala693 are enriched in low complexity. 2 stretches are compositionally biased toward low complexity: residues Ser911–Ser921 and Ser937–Thr953. 2 stretches are compositionally biased toward polar residues: residues Gln961–Ser976 and Ser989–Val998. Over residues Ser1025–Ser1040 the composition is skewed to low complexity. Positions Glu1148–Asn1159 are enriched in acidic residues.

Homodimer.

It localises to the nucleus. Its function is as follows. Regulator which is able to repress transcription, possibly via its interaction with a multiprotein chromatin remodeling complex that modifies the chromatin. The sequence is that of BRCA2-interacting transcriptional repressor EMSY from Danio rerio (Zebrafish).